The following is a 119-amino-acid chain: Flagellar transcriptional regulator FlhD (119 aa).

The protein belongs to the FlhD family. Homodimer; disulfide-linked. Forms a heterohexamer composed of two FlhC and four FlhD subunits. Each FlhC binds a FlhD dimer, forming a heterotrimer, and a hexamer assembles by dimerization of two heterotrimers.

Its subcellular location is the cytoplasm. In terms of biological role, functions in complex with FlhC as a master transcriptional regulator that regulates transcription of several flagellar and non-flagellar operons by binding to their promoter region. Activates expression of class 2 flagellar genes, including fliA, which is a flagellum-specific sigma factor that turns on the class 3 genes. Also regulates genes whose products function in a variety of physiological pathways. The chain is Flagellar transcriptional regulator FlhD from Enterobacter sp. (strain 638).